The chain runs to 635 residues: Threonine--tRNA ligase (635 aa).

A TGS domain is found at 1–61; the sequence is MPVIRLPDGS…TDDADLSIIT (61 aa). The tract at residues 242 to 533 is catalytic; that stretch reads DHRKLGRQLD…LIENYAGAMP (292 aa). Residues C333, H384, and H510 each coordinate Zn(2+).

Belongs to the class-II aminoacyl-tRNA synthetase family. As to quaternary structure, homodimer. Zn(2+) is required as a cofactor.

It localises to the cytoplasm. The enzyme catalyses tRNA(Thr) + L-threonine + ATP = L-threonyl-tRNA(Thr) + AMP + diphosphate + H(+). Catalyzes the attachment of threonine to tRNA(Thr) in a two-step reaction: L-threonine is first activated by ATP to form Thr-AMP and then transferred to the acceptor end of tRNA(Thr). Also edits incorrectly charged L-seryl-tRNA(Thr). This is Threonine--tRNA ligase from Methylobacillus flagellatus (strain ATCC 51484 / DSM 6875 / VKM B-1610 / KT).